The chain runs to 347 residues: Holliday junction branch migration complex subunit RuvB (347 aa).

Residues 1–183 (MSEERFVSGH…FGVVLQLQFY (183 aa)) are large ATPase domain (RuvB-L). ATP is bound by residues leucine 22, arginine 23, glycine 64, lysine 67, threonine 68, threonine 69, 130–132 (EDF), arginine 173, tyrosine 183, and arginine 220. Threonine 68 lines the Mg(2+) pocket. The tract at residues 184–254 (SEEELTRILM…VADAGLRMMG (71 aa)) is small ATPAse domain (RuvB-S). The segment at 257–347 (AMGLDTVDHK…PEGPVQPRLF (91 aa)) is head domain (RuvB-H). Residues arginine 312 and arginine 317 each coordinate DNA.

The protein belongs to the RuvB family. Homohexamer. Forms an RuvA(8)-RuvB(12)-Holliday junction (HJ) complex. HJ DNA is sandwiched between 2 RuvA tetramers; dsDNA enters through RuvA and exits via RuvB. An RuvB hexamer assembles on each DNA strand where it exits the tetramer. Each RuvB hexamer is contacted by two RuvA subunits (via domain III) on 2 adjacent RuvB subunits; this complex drives branch migration. In the full resolvosome a probable DNA-RuvA(4)-RuvB(12)-RuvC(2) complex forms which resolves the HJ.

It is found in the cytoplasm. It catalyses the reaction ATP + H2O = ADP + phosphate + H(+). The RuvA-RuvB-RuvC complex processes Holliday junction (HJ) DNA during genetic recombination and DNA repair, while the RuvA-RuvB complex plays an important role in the rescue of blocked DNA replication forks via replication fork reversal (RFR). RuvA specifically binds to HJ cruciform DNA, conferring on it an open structure. The RuvB hexamer acts as an ATP-dependent pump, pulling dsDNA into and through the RuvAB complex. RuvB forms 2 homohexamers on either side of HJ DNA bound by 1 or 2 RuvA tetramers; 4 subunits per hexamer contact DNA at a time. Coordinated motions by a converter formed by DNA-disengaged RuvB subunits stimulates ATP hydrolysis and nucleotide exchange. Immobilization of the converter enables RuvB to convert the ATP-contained energy into a lever motion, pulling 2 nucleotides of DNA out of the RuvA tetramer per ATP hydrolyzed, thus driving DNA branch migration. The RuvB motors rotate together with the DNA substrate, which together with the progressing nucleotide cycle form the mechanistic basis for DNA recombination by continuous HJ branch migration. Branch migration allows RuvC to scan DNA until it finds its consensus sequence, where it cleaves and resolves cruciform DNA. This Symbiobacterium thermophilum (strain DSM 24528 / JCM 14929 / IAM 14863 / T) protein is Holliday junction branch migration complex subunit RuvB.